We begin with the raw amino-acid sequence, 130 residues long: Small ribosomal subunit protein uS11c (130 aa).

This sequence belongs to the universal ribosomal protein uS11 family. In terms of assembly, part of the 30S ribosomal subunit.

The protein localises to the plastid. The protein resides in the cyanelle. The chain is Small ribosomal subunit protein uS11c from Cyanophora paradoxa.